Here is a 312-residue protein sequence, read N- to C-terminus: Ribosomal protein L11 methyltransferase (312 aa).

S-adenosyl-L-methionine contacts are provided by Thr159, Gly180, Asp201, and Asn244.

Belongs to the methyltransferase superfamily. PrmA family.

Its subcellular location is the cytoplasm. It catalyses the reaction L-lysyl-[protein] + 3 S-adenosyl-L-methionine = N(6),N(6),N(6)-trimethyl-L-lysyl-[protein] + 3 S-adenosyl-L-homocysteine + 3 H(+). Functionally, methylates ribosomal protein L11. This Desulfitobacterium hafniense (strain DSM 10664 / DCB-2) protein is Ribosomal protein L11 methyltransferase.